Reading from the N-terminus, the 235-residue chain is Motile sperm domain-containing protein 3 (235 aa).

Disordered regions lie at residues 1–25 (MRRG…RGAP) and 143–171 (ELQG…FQEH). The MSP domain maps to 33–145 (PVLVFPPDLV…RAPAYPLELQ (113 aa)). The span at 149–164 (DPAPRPGPPAGTPPPT) shows a compositional bias: pro residues. The next 2 helical transmembrane spans lie at 180–200 (SFLL…LPLP) and 213–233 (VSLG…MVFL).

It is found in the membrane. This chain is Motile sperm domain-containing protein 3 (MOSPD3), found in Homo sapiens (Human).